The primary structure comprises 57 residues: Large ribosomal subunit protein bL32 (57 aa).

Over residues 1–19 (MATPKFKKSRANTHSRRSQ) the composition is skewed to basic residues. Residues 1 to 20 (MATPKFKKSRANTHSRRSQW) form a disordered region.

It belongs to the bacterial ribosomal protein bL32 family.

The chain is Large ribosomal subunit protein bL32 from Corynebacterium aurimucosum (strain ATCC 700975 / DSM 44827 / CIP 107346 / CN-1) (Corynebacterium nigricans).